The chain runs to 562 residues: Undecaprenyl phosphate-alpha-4-amino-4-deoxy-L-arabinose arabinosyl transferase (562 aa).

The next 12 membrane-spanning stretches (helical) occupy residues 14 to 34 (IKFS…PLNY), 91 to 111 (FSVR…IYLF), 120 to 140 (ILSL…IIGT), 142 to 162 (SVLD…FWLA), 186 to 206 (FITK…IWLF), 215 to 235 (TIIH…PWIY), 267 to 287 (PFWY…GFLF), 302 to 322 (IEFY…ISKG), 324 to 344 (LPTY…KNIE), 354 to 374 (LLKI…IFII), 395 to 415 (LILC…IIFN), and 425 to 445 (LSII…IIYA).

This sequence belongs to the glycosyltransferase 83 family.

Its subcellular location is the cell inner membrane. The enzyme catalyses 4-amino-4-deoxy-alpha-L-arabinopyranosyl di-trans,octa-cis-undecaprenyl phosphate + lipid IVA = lipid IIA + di-trans,octa-cis-undecaprenyl phosphate.. It participates in lipopolysaccharide metabolism; 4-amino-4-deoxy-beta-L-arabinose-lipid A biosynthesis. Its function is as follows. Catalyzes the transfer of the L-Ara4N moiety of the glycolipid undecaprenyl phosphate-alpha-L-Ara4N to lipid A. The modified arabinose is attached to lipid A and is required for resistance to polymyxin and cationic antimicrobial peptides. This is Undecaprenyl phosphate-alpha-4-amino-4-deoxy-L-arabinose arabinosyl transferase from Wigglesworthia glossinidia brevipalpis.